Consider the following 206-residue polypeptide: Cytochrome c oxidase assembly factor 8 (206 aa).

The transit peptide at 1 to 39 (MLPCAAGARGRGAMVVLRAGKKTFLPPLCRAFACRGCQL) directs the protein to the mitochondrion.

The protein belongs to the COA8 family. Post-translationally, N-terminal mitochondrial targeting sequence is cleaved from the mature protein once in the mitochondrion. In terms of processing, in normal conditions, the cytoplasmic precursor protein is rapidly degraded by the ubiquitination-proteasome system (UPS). Oxidative stress induces protein stabilization and import into mitochondria where it protects COX from degradation. Expressed in fibroblasts.

It localises to the mitochondrion inner membrane. Required for cytochrome c complex (COX) IV assembly and function Protects COX assembly from oxidation-induced degradation, COX being the terminal component of the mitochondrial respiratory chain. The chain is Cytochrome c oxidase assembly factor 8 from Homo sapiens (Human).